Reading from the N-terminus, the 475-residue chain is ATP synthase subunit beta, chloroplastic (475 aa).

Position 155-162 (155-162 (GGAGVGKT)) interacts with ATP.

It belongs to the ATPase alpha/beta chains family. In terms of assembly, F-type ATPases have 2 components, CF(1) - the catalytic core - and CF(0) - the membrane proton channel. CF(1) has five subunits: alpha(3), beta(3), gamma(1), delta(1), epsilon(1). CF(0) has four main subunits: a(1), b(1), b'(1) and c(9-12).

Its subcellular location is the plastid. It localises to the chloroplast thylakoid membrane. It catalyses the reaction ATP + H2O + 4 H(+)(in) = ADP + phosphate + 5 H(+)(out). In terms of biological role, produces ATP from ADP in the presence of a proton gradient across the membrane. The catalytic sites are hosted primarily by the beta subunits. The protein is ATP synthase subunit beta, chloroplastic of Pyropia yezoensis (Susabi-nori).